The sequence spans 156 residues: Urease accessory protein UreE (156 aa).

Residues 133–156 form a disordered region; the sequence is RPESGAYGSGRTMGHDHGPFHVHA. A compositionally biased stretch (basic and acidic residues) spans 145–156; it reads MGHDHGPFHVHA.

It belongs to the UreE family.

It localises to the cytoplasm. In terms of biological role, involved in urease metallocenter assembly. Binds nickel. Probably functions as a nickel donor during metallocenter assembly. This chain is Urease accessory protein UreE, found in Rhodobacter capsulatus (Rhodopseudomonas capsulata).